The chain runs to 76 residues: U-scoloptoxin(13)-Sm1a (76 aa).

A signal peptide spans 1–22; it reads MAYICAXTLAFLLCVNTGIIQA.

This sequence belongs to the scoloptoxin-13 family. Post-translationally, contains 4 disulfide bonds. In terms of tissue distribution, expressed by the venom gland.

The protein resides in the secreted. This chain is U-scoloptoxin(13)-Sm1a, found in Scolopendra morsitans (Tanzanian blue ringleg centipede).